The primary structure comprises 229 residues: 5'-methylthioadenosine/S-adenosylhomocysteine nucleosidase (229 aa).

E12 functions as the Proton acceptor in the catalytic mechanism. Substrate is bound by residues G78, I152, and 173–174; that span reads ME. D197 (proton donor) is an active-site residue.

Belongs to the PNP/UDP phosphorylase family. MtnN subfamily.

The enzyme catalyses S-adenosyl-L-homocysteine + H2O = S-(5-deoxy-D-ribos-5-yl)-L-homocysteine + adenine. It catalyses the reaction S-methyl-5'-thioadenosine + H2O = 5-(methylsulfanyl)-D-ribose + adenine. The catalysed reaction is 5'-deoxyadenosine + H2O = 5-deoxy-D-ribose + adenine. It functions in the pathway amino-acid biosynthesis; L-methionine biosynthesis via salvage pathway; S-methyl-5-thio-alpha-D-ribose 1-phosphate from S-methyl-5'-thioadenosine (hydrolase route): step 1/2. Catalyzes the irreversible cleavage of the glycosidic bond in both 5'-methylthioadenosine (MTA) and S-adenosylhomocysteine (SAH/AdoHcy) to adenine and the corresponding thioribose, 5'-methylthioribose and S-ribosylhomocysteine, respectively. Also cleaves 5'-deoxyadenosine, a toxic by-product of radical S-adenosylmethionine (SAM) enzymes, into 5-deoxyribose and adenine. The protein is 5'-methylthioadenosine/S-adenosylhomocysteine nucleosidase of Pasteurella multocida (strain Pm70).